Consider the following 410-residue polypeptide: Shaggy-related protein kinase epsilon (410 aa).

Ala2 is modified (N-acetylalanine). The region spanning 74 to 358 is the Protein kinase domain; sequence YMAERIVGQG…AMEAIVHPFF (285 aa). ATP is bound by residues 80–88 and Lys103; that span reads VGQGSFGIV. Asp199 serves as the catalytic Proton acceptor. Position 234 is a phosphotyrosine (Tyr234).

Belongs to the protein kinase superfamily. CMGC Ser/Thr protein kinase family. GSK-3 subfamily. As to quaternary structure, binds to KIB1. Post-translationally, autophosphorylated mainly on threonine and serine residues.

The catalysed reaction is L-seryl-[protein] + ATP = O-phospho-L-seryl-[protein] + ADP + H(+). It carries out the reaction L-threonyl-[protein] + ATP = O-phospho-L-threonyl-[protein] + ADP + H(+). In terms of biological role, may mediate extracellular signals to regulate transcription in differentiating cells. This chain is Shaggy-related protein kinase epsilon (ASK5), found in Arabidopsis thaliana (Mouse-ear cress).